A 230-amino-acid polypeptide reads, in one-letter code: Ubiquitin carboxyl-terminal hydrolase isozyme L3 (230 aa).

A UCH catalytic domain is found at 5 to 229; the sequence is RWLPLEANPE…LRFNAIALSA (225 aa). The segment at 8 to 13 is interaction with ubiquitin; the sequence is PLEANP. The active-site Nucleophile is Cys-95. Residue Ser-130 is modified to Phosphoserine. An interaction with ubiquitin. Crossover loop which restricts access of large ubiquitin adducts to the active site region spans residues 152 to 159; that stretch reads AHEGQTEA. His-169 (proton donor) is an active-site residue. Residues 219-224 form an interaction with ubiquitin region; that stretch reads ELRFNA.

This sequence belongs to the peptidase C12 family. In terms of assembly, preferentially binds diubiquitin; the interaction does not hydrolyze diubiquitin but, in vitro, inhibits the hydrolyzing activity on other substrates. In terms of tissue distribution, highly expressed in heart, skeletal muscle, and testis.

The protein resides in the cytoplasm. It catalyses the reaction Thiol-dependent hydrolysis of ester, thioester, amide, peptide and isopeptide bonds formed by the C-terminal Gly of ubiquitin (a 76-residue protein attached to proteins as an intracellular targeting signal).. Its activity is regulated as follows. Inhibited by monoubiquitin and diubiquitin. Functionally, deubiquitinating enzyme (DUB) that controls levels of cellular ubiquitin through processing of ubiquitin precursors and ubiquitinated proteins. Thiol protease that recognizes and hydrolyzes a peptide bond at the C-terminal glycine of either ubiquitin or NEDD8. Has a 10-fold preference for Arg and Lys at position P3'', and exhibits a preference towards 'Lys-48'-linked ubiquitin chains. Deubiquitinates ENAC in apical compartments, thereby regulating apical membrane recycling. Indirectly increases the phosphorylation of IGFIR, AKT and FOXO1 and promotes insulin-signaling and insulin-induced adipogenesis. Required for stress-response retinal, skeletal muscle and germ cell maintenance. May be involved in working memory. Can hydrolyze UBB(+1), a mutated form of ubiquitin which is not effectively degraded by the proteasome and is associated with neurogenerative disorders. This Homo sapiens (Human) protein is Ubiquitin carboxyl-terminal hydrolase isozyme L3 (UCHL3).